A 210-amino-acid polypeptide reads, in one-letter code: Ribosomal RNA large subunit methyltransferase E (210 aa).

Gly60, Trp62, Asp80, Asp96, and Asp122 together coordinate S-adenosyl-L-methionine. Residue Lys162 is the Proton acceptor of the active site.

The protein belongs to the class I-like SAM-binding methyltransferase superfamily. RNA methyltransferase RlmE family.

The protein localises to the cytoplasm. It carries out the reaction uridine(2552) in 23S rRNA + S-adenosyl-L-methionine = 2'-O-methyluridine(2552) in 23S rRNA + S-adenosyl-L-homocysteine + H(+). Specifically methylates the uridine in position 2552 of 23S rRNA at the 2'-O position of the ribose in the fully assembled 50S ribosomal subunit. The sequence is that of Ribosomal RNA large subunit methyltransferase E from Dichelobacter nodosus (strain VCS1703A).